The sequence spans 195 residues: Pyruvoyl-dependent arginine decarboxylase AaxB (195 aa).

Residue Ser53 is modified to Pyruvic acid (Ser).

This sequence belongs to the pyruvoyl-dependent arginine decarboxylase family. In terms of assembly, trimer of an alpha-beta dimer. Pyruvate is required as a cofactor.

It is found in the cytoplasm. The catalysed reaction is L-arginine + H(+) = agmatine + CO2. Part of the AaxABC system, catalyzes the decarboxylation of L-arginine. The arginine uptake by the bacterium in the macrophage may be a virulence factor against the host innate immune response. The protein is Pyruvoyl-dependent arginine decarboxylase AaxB (aaxB) of Chlamydia muridarum (strain MoPn / Nigg).